A 303-amino-acid polypeptide reads, in one-letter code: MSSARFDSSDRSAWYMGPVTRQEAQTRLQGQRHGMFLVRDSSTCPGDYVLSVSENSRVSHYIINSLPNRRFKIGDQEFDHLPALLEFYKIHYLDTTTLIEPAPRYPSPPVGSVSAPNLPTAEENLEYVRTLYDFPGNDAEDLPFKKGELLVIIEKPEEQWWSARNKDGRVGMIPVPYVEKLVRSSPHGKHGNRNSNSYGIPEPAHAYAQPQTTTPLPTVASTPGAAINPLPSTQNGPVFAKAIQKRVPCAYDKTALALEVGDIVKVTRMNINGQWEGEVNGRKGLFPFTHVKIFDPQNPDDNE.

The 89-residue stretch at 14–102 (WYMGPVTRQE…LDTTTLIEPA (89 aa)) folds into the SH2 domain. Residues 123-183 (ENLEYVRTLY…PVPYVEKLVR (61 aa)) enclose the SH3 1 domain. Tyr-127 bears the Phosphotyrosine mark. The segment at 184 to 203 (SSPHGKHGNRNSNSYGIPEP) is disordered. Residue Tyr-207 is modified to Phosphotyrosine. The region spanning 235-296 (NGPVFAKAIQ…PFTHVKIFDP (62 aa)) is the SH3 2 domain.

Belongs to the CRK family. Interacts with DOCK2 and EPOR. Interacts with phosphorylated CBLB and IRS4. Interacts with INPP5D/SHIP1. Interacts with BCAR1/CAS and NEDD9/HEF1. Post-translationally, phosphorylated on tyrosine. Phosphorylation is prominent during early development, but decreases at later embryonic stages and in newborn mice.

Its function is as follows. May mediate the transduction of intracellular signals. This Mus musculus (Mouse) protein is Crk-like protein (Crkl).